Consider the following 210-residue polypeptide: Ribosomal RNA large subunit methyltransferase E (210 aa).

Residues G61, W63, D81, D97, and D122 each contribute to the S-adenosyl-L-methionine site. The active-site Proton acceptor is the K162.

This sequence belongs to the class I-like SAM-binding methyltransferase superfamily. RNA methyltransferase RlmE family.

It localises to the cytoplasm. The catalysed reaction is uridine(2552) in 23S rRNA + S-adenosyl-L-methionine = 2'-O-methyluridine(2552) in 23S rRNA + S-adenosyl-L-homocysteine + H(+). In terms of biological role, specifically methylates the uridine in position 2552 of 23S rRNA at the 2'-O position of the ribose in the fully assembled 50S ribosomal subunit. This Xanthomonas oryzae pv. oryzae (strain MAFF 311018) protein is Ribosomal RNA large subunit methyltransferase E.